The chain runs to 34 residues: N(4)-(Beta-N-acetylglucosaminyl)-L-asparaginase (34 aa).

Residue Thr18 is the Nucleophile of the active site.

Belongs to the Ntn-hydrolase family. In terms of assembly, heterotetramer of two alpha and two beta chains arranged as a dimer of alpha/beta heterodimers. In terms of processing, cleaved into an alpha and beta chain by autocatalysis; this activates the enzyme. The N-terminal residue of the beta subunit is responsible for the nucleophile hydrolase activity. Post-translationally, N-glycosylated.

The protein localises to the lysosome. It catalyses the reaction N(4)-(beta-N-acetyl-D-glucosaminyl)-L-asparagine + H2O = N-acetyl-beta-D-glucosaminylamine + L-aspartate + H(+). In terms of biological role, cleaves the GlcNAc-Asn bond which joins oligosaccharides to the peptide of asparagine-linked glycoproteins. This Sus scrofa (Pig) protein is N(4)-(Beta-N-acetylglucosaminyl)-L-asparaginase (AGA).